Consider the following 611-residue polypeptide: MKDMDIKAVFIGDKAENGPVYKMLLNKMVDEHLGWRENYIPSDMPAISEGDKLTPDYLATRDHMIEVLDEVSQRLRAGSIPWHSAGRYWGQMNAETLMPALLAYNYAMLWNPNNVALESSMATSQMEAEVGQDFASLFNMADGWGHIAADGSIANLEGLWYARCIKSIPLAVKEVLPEKVKNMSEWALLNLSVEEILEMTESFTDEEMDEVKAASSRSGKNIQKLGKWLVPQTKHYSWMKALDICGVGLDQMVAIPVQEDYRMDINALEKTIRELADQKIPILGVVAVVGTTEEGQVDSVDKIIQLREKLKDEGIYFYLHVDAAYGGYARSLFLNEAGEFVPYASLAEFFEEHHVFHHYVTIDKEVYEGFRAISEADSVTIDPHKMGYVPYAAGGIVIKHKNMRNIISYFAPYVFEKSVKAPDMLGAYILEGSKAGATAAAVWTAHRVLPLNVTGYGQLIGASIEAAQRFREFLEQLHFTVKGKTIEVYPLNHPDFNMVNWVFKVQDCTDLNAINELNEKMFDRSSYMDGDVYGERFITSHTTFTQEDYGDSPIRFIERMGLSKEEWQKEQQITLLRAAIMTPYLNDDRIFNFYTKEIAKAMEKKLNEIIK.

Pyridoxal 5'-phosphate is bound by residues 151–152, Thr292, and 382–384; these read GS and DPH. Residue Lys385 is modified to N6-(pyridoxal phosphate)lysine. Tyr413 (proton donor) is an active-site residue. Ser433 lines the pyridoxal 5'-phosphate pocket.

This sequence belongs to the group II decarboxylase family. Tyrosine decarboxylase subfamily. Homodimer. It depends on pyridoxal 5'-phosphate as a cofactor.

The catalysed reaction is L-tyrosine + H(+) = tyramine + CO2. It catalyses the reaction L-dopa + H(+) = dopamine + CO2. It participates in amino-acid metabolism. With respect to regulation, levodopa decarboxylation is not inhibited by carbidopa, benserazide, and methyldopa, that are three human L-dopa decarboxylase inhibitors. In terms of biological role, catalyzes the decarboxylation of L-tyrosine to produce tyramine. Plays a role in acid resistance since tyramine production via tyrosine decarboxylation appears to provide a cytosolic pH maintenance mechanism that helps the bacterium cope with acid stress such as that encountered in gastrointestinal tract (GIT) environments. Therefore, may contribute to the colonization of the human GIT by E.faecium. Functionally, also involved in drug metabolism, being able to catalyze decarboxylation of levodopa (L-dopa) to dopamine. In gut microbiota this enzyme is in fact exclusively responsible for the decarboxylation of levodopa, and thus reduces in situ levels of levodopa in the treatment of Parkinson's disease. It was shown that abundance of bacterial tyrosine decarboxylase in the proximal small intestine - the primary site of levodopa absorption - contributes to interindividual variation in drug efficacy and can explain the requirement for an increased dosage regimen of levodopa treatment in Parkinson's disease patients. This chain is L-tyrosine decarboxylase, found in Enterococcus faecium (Streptococcus faecium).